The following is a 98-amino-acid chain: NADH-ubiquinone oxidoreductase chain 4L (98 aa).

The next 3 membrane-spanning stretches (helical) occupy residues 1 to 21 (MSMV…GLLI), 30 to 50 (LLCL…TILT), and 61 to 81 (IILL…LVMI).

This sequence belongs to the complex I subunit 4L family. Core subunit of respiratory chain NADH dehydrogenase (Complex I) which is composed of 45 different subunits.

The protein resides in the mitochondrion inner membrane. It carries out the reaction a ubiquinone + NADH + 5 H(+)(in) = a ubiquinol + NAD(+) + 4 H(+)(out). Functionally, core subunit of the mitochondrial membrane respiratory chain NADH dehydrogenase (Complex I) which catalyzes electron transfer from NADH through the respiratory chain, using ubiquinone as an electron acceptor. Part of the enzyme membrane arm which is embedded in the lipid bilayer and involved in proton translocation. This is NADH-ubiquinone oxidoreductase chain 4L (MT-ND4L) from Gulo gulo (Wolverine).